Reading from the N-terminus, the 609-residue chain is Granule-bound starch synthase 1, chloroplastic/amyloplastic (609 aa).

The transit peptide at 1–77 (MSALTTSQLA…SRRFPSVVVY (77 aa)) directs the protein to the chloroplast. Residues 29 to 67 (RHGFQGLKPRSPAGGDATSLSVTTSARATPKQQRSVQRG) form a disordered region. The segment covering 46–66 (TSLSVTTSARATPKQQRSVQR) has biased composition (polar residues). K97 contributes to the ADP-alpha-D-glucose binding site. G100, R408, K413, K462, and Q493 together coordinate ADP. C337 and C529 are disulfide-bonded.

This sequence belongs to the glycosyltransferase 1 family. Bacterial/plant glycogen synthase subfamily.

It is found in the plastid. Its subcellular location is the chloroplast. It localises to the amyloplast. It catalyses the reaction an NDP-alpha-D-glucose + [(1-&gt;4)-alpha-D-glucosyl](n) = [(1-&gt;4)-alpha-D-glucosyl](n+1) + a ribonucleoside 5'-diphosphate + H(+). Its pathway is glycan biosynthesis; starch biosynthesis. In terms of biological role, required for the synthesis of amylose in endosperm. The protein is Granule-bound starch synthase 1, chloroplastic/amyloplastic (WAXY) of Oryza sativa subsp. indica (Rice).